Here is a 72-residue protein sequence, read N- to C-terminus: UPF0346 protein GK1571 (72 aa).

The protein belongs to the UPF0346 family.

This chain is UPF0346 protein GK1571, found in Geobacillus kaustophilus (strain HTA426).